The sequence spans 241 residues: Ribose-5-phosphate isomerase A (241 aa).

Residues 28–31, 83–86, and 96–99 each bind substrate; these read TGST, DGAD, and KGGG. Glu-105 functions as the Proton acceptor in the catalytic mechanism. Lys-123 provides a ligand contact to substrate.

It belongs to the ribose 5-phosphate isomerase family. Homodimer.

The enzyme catalyses aldehydo-D-ribose 5-phosphate = D-ribulose 5-phosphate. Its pathway is carbohydrate degradation; pentose phosphate pathway; D-ribose 5-phosphate from D-ribulose 5-phosphate (non-oxidative stage): step 1/1. Catalyzes the reversible conversion of ribose-5-phosphate to ribulose 5-phosphate. The chain is Ribose-5-phosphate isomerase A from Rhodopseudomonas palustris (strain BisA53).